The primary structure comprises 287 residues: Formamidopyrimidine-DNA glycosylase (287 aa).

P2 acts as the Schiff-base intermediate with DNA in catalysis. The active-site Proton donor is E3. The Proton donor; for beta-elimination activity role is filled by K58. DNA-binding residues include H104, R123, and R166. Residues 251-287 (RVYDREGEPCPTPACKGVIAREVQAGRSTFFCPVCQV) form an FPG-type zinc finger. The Proton donor; for delta-elimination activity role is filled by R277.

Belongs to the FPG family. In terms of assembly, monomer. Requires Zn(2+) as cofactor.

The enzyme catalyses Hydrolysis of DNA containing ring-opened 7-methylguanine residues, releasing 2,6-diamino-4-hydroxy-5-(N-methyl)formamidopyrimidine.. It carries out the reaction 2'-deoxyribonucleotide-(2'-deoxyribose 5'-phosphate)-2'-deoxyribonucleotide-DNA = a 3'-end 2'-deoxyribonucleotide-(2,3-dehydro-2,3-deoxyribose 5'-phosphate)-DNA + a 5'-end 5'-phospho-2'-deoxyribonucleoside-DNA + H(+). Its function is as follows. Involved in base excision repair of DNA damaged by oxidation or by mutagenic agents. Acts as a DNA glycosylase that recognizes and removes damaged bases. Has a preference for oxidized purines, such as 7,8-dihydro-8-oxoguanine (8-oxoG). Has AP (apurinic/apyrimidinic) lyase activity and introduces nicks in the DNA strand. Cleaves the DNA backbone by beta-delta elimination to generate a single-strand break at the site of the removed base with both 3'- and 5'-phosphates. The polypeptide is Formamidopyrimidine-DNA glycosylase (Caulobacter vibrioides (strain ATCC 19089 / CIP 103742 / CB 15) (Caulobacter crescentus)).